Consider the following 286-residue polypeptide: CDP-diacylglycerol--serine O-phosphatidyltransferase (286 aa).

The next 5 helical transmembrane spans lie at 15–35 (ILPS…IKFA), 95–115 (MLSK…CVVL), 135–155 (EFFV…LLAL), 167–187 (VWFL…GIPM), and 207–227 (LAIC…VIII).

It belongs to the CDP-alcohol phosphatidyltransferase class-I family.

Its subcellular location is the cell membrane. It carries out the reaction a CDP-1,2-diacyl-sn-glycerol + L-serine = a 1,2-diacyl-sn-glycero-3-phospho-L-serine + CMP + H(+). The chain is CDP-diacylglycerol--serine O-phosphatidyltransferase (pssA) from Mycobacterium bovis (strain ATCC BAA-935 / AF2122/97).